The chain runs to 2364 residues: Cytotoxin-L (2364 aa).

A four-helical bundle region spans residues 1–91 (MNLVNKAQLQ…EVLELKNNSL (91 aa)). One can recognise a GT44 domain in the interval 96 to 468 (KNLHFIWIGG…APDVRSTINL (373 aa)). The tract at residues 96–468 (KNLHFIWIGG…APDVRSTINL (373 aa)) is glucosyltransferase region. Residues 101–103 (IWI), Asn-139, 265–270 (LAAASD), and 286–288 (DVD) contribute to the UDP-alpha-D-glucose site. Mg(2+) contacts are provided by Asp-288, Glu-515, and Ser-518. UDP-alpha-D-glucose is bound at residue 518 to 520 (SLW). The interval 544 to 799 (GEDDNLDFAQ…KSKYLHELST (256 aa)) is autoprocessing region. Residues Glu-545 and Asp-546 each contribute to the Zn(2+) site. The Peptidase C80 domain maps to 567–774 (LSSMKTRNKE…EESIIKDISS (208 aa)). 1D-myo-inositol hexakisphosphate is bound by residues Tyr-577, Lys-600, and Lys-647. A Zn(2+)-binding site is contributed by His-653. Catalysis depends on His-653, which acts as the For protease activity. Cys-698 acts as the Nucleophile; for protease activity in catalysis. Residue His-757 participates in Zn(2+) binding. 1D-myo-inositol hexakisphosphate contacts are provided by Lys-764, Lys-775, and Lys-792. The segment at 800–1500 (LLQEIRNNAN…ESIIRNIYMP (701 aa)) is translocation region. 5 interaction with host SEMA6A and SEMA6B regions span residues 1433–1438 (CMKLIE), 1466–1471 (DNETKY), 1484–1495 (FTAEFSNESIIR), 1504–1511 (NLFIYSSK), and 1596–1601 (YNNLDP). Cell wall-binding repeat units lie at residues 1813-1832 (EFGL…FGNM), 1833-1852 (VSGL…PKNN), 1854-1873 (ITGF…TKSG), 1876-1895 (SIGE…QGIL), 1926-1945 (FIGK…NYRA), 1946-1965 (AVEW…KTGE), 1967-1986 (LKGL…NGIM), 1987-2006 (QTGF…DGVM), 2007-2026 (QVGY…NGER), 2057-2076 (YNGI…SNTA), 2077-2097 (VVGW…NTAE), 2099-2118 (CIGL…NGIR), 2119-2138 (QLGF…SGKI), 2139-2158 (ELGY…SGLV), 2209-2224 (ETGW…YFDP), 2227-2249 (KKAY…NGIM), 2250-2269 (RTGL…DGKM), 2270-2289 (QFGY…DGKM), 2320-2339 (YTGW…EYIA), and 2340-2359 (ATGS…DTAE). The interval 1835 to 2364 (GLIYINDSLY…PDTAELVVSE (530 aa)) is receptor-binding (CROPS) region.

This sequence belongs to the clostridial glucosylating toxin (LCGT) family. In terms of assembly, homomultimer; forms an inactive homomultimer at pH 8, which dissociates at pH 4, leading to cytotoxicity. Interacts with host SEMA6A; interaction promotes toxin entry into host cell. Interacts with host SEMA6B; interaction promotes toxin entry into host cell. It depends on Zn(2+) as a cofactor. Requires Mn(2+) as cofactor. The cofactor is Mg(2+). Post-translationally, undergoes autocatalytic cleavage to release the N-terminal part (Glucosyltransferase TcsL), which constitutes the active part of the toxin, in the host cytosol. 1D-myo-inositol hexakisphosphate-binding (InsP6) activates the peptidase C80 domain and promotes autoprocessing.

It localises to the secreted. Its subcellular location is the host endosome membrane. It is found in the host cytoplasm. The protein resides in the host cytosol. The protein localises to the host cell membrane. It catalyses the reaction L-threonyl-[protein] + UDP-alpha-D-glucose = 3-O-(alpha-D-glucosyl)-L-threonyl-[protein] + UDP + H(+). With respect to regulation, protease activity is activated upon binding to 1D-myo-inositol hexakisphosphate (InsP6), which induces conformational reorganization. Functionally, precursor of a cytotoxin that targets the vascular endothelium, inducing an anti-inflammatory effect and resulting in lethal toxic shock syndrome. TcsL constitutes the main toxin that mediates the pathology of P.sordellii infection, an anaerobic Gram-positive bacterium found in soil and in the gastrointestinal and vaginal tracts of animals and humans; although the majority of carriers are asymptomatic, pathogenic P.sordellii infections arise rapidly and are highly lethal. This form constitutes the precursor of the toxin: it enters into host cells and mediates autoprocessing to release the active toxin (Glucosyltransferase TcsL) into the host cytosol. Targets vascular endothelium by binding to the semaphorin proteins SEMA6A and SEMA6B, and enters host cells via clathrin-mediated endocytosis. Once entered into host cells, acidification in the endosome promotes the membrane insertion of the translocation region and formation of a pore, leading to translocation of the GT44 and peptidase C80 domains across the endosomal membrane. This activates the peptidase C80 domain and autocatalytic processing, releasing the N-terminal part (Glucosyltransferase TcsL), which constitutes the active part of the toxin, in the cytosol. In terms of biological role, active form of the toxin, which is released into the host cytosol following autoprocessing and inactivates small GTPases. Acts by mediating monoglucosylation of small GTPases of the Ras (H-Ras/HRAS, K-Ras/KRAS and N-Ras/NRAS) family in host cells at the conserved threonine residue located in the switch I region ('Thr-37/35'), using UDP-alpha-D-glucose as the sugar donor. Also able to catalyze monoglucosylation of some members of the Rho family (Rac1 and Rap2A), but with less efficiency than with Ras proteins. Monoglucosylation of host small GTPases completely prevents the recognition of the downstream effector, blocking the GTPases in their inactive form and leading to apoptosis. Induces an anti-inflammatory effect, mainly by inactivating Ras proteins which results in blockage of the cell cycle and killing of immune cells. The absence or moderate local inflammatory response allows C.sordellii spreading in deep tissues, production of toxin which is released in the general circulation and causes a toxic shock syndrome. In Paraclostridium sordellii (strain ATCC 9714 / DSM 2141 / JCM 3814 / LMG 15708 / NCIMB 10717 / 211) (Clostridium sordellii), this protein is Cytotoxin-L.